The chain runs to 269 residues: Diaminopimelate epimerase (269 aa).

Residues Asn13, Gln46, and Asn65 each coordinate substrate. The Proton donor role is filled by Cys74. Substrate-binding positions include 75–76 (GN), Asn149, Asn182, and 200–201 (ER). Residue Cys209 is the Proton acceptor of the active site. 210–211 (GT) contacts substrate.

The protein belongs to the diaminopimelate epimerase family. Homodimer.

It is found in the cytoplasm. It carries out the reaction (2S,6S)-2,6-diaminopimelate = meso-2,6-diaminopimelate. Its pathway is amino-acid biosynthesis; L-lysine biosynthesis via DAP pathway; DL-2,6-diaminopimelate from LL-2,6-diaminopimelate: step 1/1. Functionally, catalyzes the stereoinversion of LL-2,6-diaminopimelate (L,L-DAP) to meso-diaminopimelate (meso-DAP), a precursor of L-lysine and an essential component of the bacterial peptidoglycan. The sequence is that of Diaminopimelate epimerase from Zymomonas mobilis subsp. mobilis (strain ATCC 31821 / ZM4 / CP4).